We begin with the raw amino-acid sequence, 307 residues long: Ribonuclease Z (307 aa).

Residues His-63, His-65, Asp-67, His-68, His-141, Asp-212, and His-270 each contribute to the Zn(2+) site. Asp-67 serves as the catalytic Proton acceptor.

This sequence belongs to the RNase Z family. Homodimer. The cofactor is Zn(2+).

The enzyme catalyses Endonucleolytic cleavage of RNA, removing extra 3' nucleotides from tRNA precursor, generating 3' termini of tRNAs. A 3'-hydroxy group is left at the tRNA terminus and a 5'-phosphoryl group is left at the trailer molecule.. In terms of biological role, zinc phosphodiesterase, which displays some tRNA 3'-processing endonuclease activity. Probably involved in tRNA maturation, by removing a 3'-trailer from precursor tRNA. The sequence is that of Ribonuclease Z from Bacillus cereus (strain G9842).